The following is a 471-amino-acid chain: ATP synthase subunit beta (471 aa).

Position 153 to 160 (153 to 160 (GGAGVGKT)) interacts with ATP.

Belongs to the ATPase alpha/beta chains family. F-type ATPases have 2 components, CF(1) - the catalytic core - and CF(0) - the membrane proton channel. CF(1) has five subunits: alpha(3), beta(3), gamma(1), delta(1), epsilon(1). CF(0) has three main subunits: a(1), b(2) and c(9-12). The alpha and beta chains form an alternating ring which encloses part of the gamma chain. CF(1) is attached to CF(0) by a central stalk formed by the gamma and epsilon chains, while a peripheral stalk is formed by the delta and b chains.

The protein localises to the cell inner membrane. The catalysed reaction is ATP + H2O + 4 H(+)(in) = ADP + phosphate + 5 H(+)(out). Functionally, produces ATP from ADP in the presence of a proton gradient across the membrane. The catalytic sites are hosted primarily by the beta subunits. The chain is ATP synthase subunit beta from Verminephrobacter eiseniae (strain EF01-2).